Consider the following 193-residue polypeptide: Ion-translocating oxidoreductase complex subunit A (193 aa).

6 helical membrane passes run 5 to 25, 39 to 59, 63 to 83, 102 to 122, 134 to 154, and 171 to 191; these read LLLF…FLGL, MGMG…AWLI, ILIP…VIAV, LLGI…VALL, ALYG…FAAI, and AIAL…SGLV.

This sequence belongs to the NqrDE/RnfAE family. In terms of assembly, the complex is composed of six subunits: RsxA, RsxB, RsxC, RsxD, RsxE and RsxG.

It is found in the cell inner membrane. In terms of biological role, part of a membrane-bound complex that couples electron transfer with translocation of ions across the membrane. Required to maintain the reduced state of SoxR. The protein is Ion-translocating oxidoreductase complex subunit A of Shigella boydii serotype 18 (strain CDC 3083-94 / BS512).